Reading from the N-terminus, the 229-residue chain is MKQFEGIKFIAFDLDGTLLDSVPDLAEAADKAMQALGRDRVTVEQVTTWIGNGADILIGRALSQSIELDPELDLALHQEARALFDRFYDEGGHKQSHLYAGVKETLAAFHQANIPMAIVTNKPAQFVPHLLEQHGISEYFVDVIGGDTFPLKKPDPFALHWLMEKHQLAACEMLMIGDSRNDILAAQAATCHVVGLTYGYNYGQPISASNPDVVLDQFSQLIDVVKLAC.

Aspartate 13 serves as the catalytic Nucleophile. The Mg(2+) site is built by aspartate 13, aspartate 15, and aspartate 178.

It belongs to the HAD-like hydrolase superfamily. CbbY/CbbZ/Gph/YieH family. Mg(2+) is required as a cofactor.

It carries out the reaction 2-phosphoglycolate + H2O = glycolate + phosphate. The protein operates within organic acid metabolism; glycolate biosynthesis; glycolate from 2-phosphoglycolate: step 1/1. Specifically catalyzes the dephosphorylation of 2-phosphoglycolate. Is involved in the dissimilation of the intracellular 2-phosphoglycolate formed during the DNA repair of 3'-phosphoglycolate ends, a major class of DNA lesions induced by oxidative stress. The polypeptide is Phosphoglycolate phosphatase (Photobacterium profundum (strain SS9)).